A 311-amino-acid polypeptide reads, in one-letter code: MSESNVKHLISWEDWSDSEILDLLDFAIHVKKNRVNYAGHMSGRSLAMLFQKTSTRTRVSFEVAMTEMGGHGIYLDWMASNFQLSDIDLEARYLSRNVSVIMARLKKHEDLLTMRNGSQVPLINGCDNMFHPCQSLADIMTIALDKPEIPLNQIQLTYIGVHNNVVNSLIGITSALGIRLTLVTPIAEKENIHSQTVERAKAKGTLSWEENLKKAIQNADYVYTDTWLDMEFFNDPSYADKKKQRMELMMPYQINSSLLEKTNAKVMHDMPIHAGYEITREVVLGPRSIIFQQAENRLDAQKAVILKLLEA.

Carbamoyl phosphate-binding positions include 54-58 (STRTR), N81, R104, and 131-134 (HPCQ). Residues N164, D225, and 229-230 (DM) contribute to the L-ornithine site. Residues 268–271 (HDMP), T279, and R297 each bind carbamoyl phosphate.

It belongs to the aspartate/ornithine carbamoyltransferase superfamily. OTCase family.

The protein resides in the cytoplasm. The enzyme catalyses carbamoyl phosphate + L-ornithine = L-citrulline + phosphate + H(+). Its pathway is amino-acid biosynthesis; L-arginine biosynthesis; L-arginine from L-ornithine and carbamoyl phosphate: step 1/3. Reversibly catalyzes the transfer of the carbamoyl group from carbamoyl phosphate (CP) to the N(epsilon) atom of ornithine (ORN) to produce L-citrulline. The chain is Ornithine carbamoyltransferase (argF) from Leptospira interrogans serogroup Icterohaemorrhagiae serovar copenhageni (strain Fiocruz L1-130).